A 213-amino-acid polypeptide reads, in one-letter code: Uracil phosphoribosyltransferase (213 aa).

Residues R78, R103, and 131–139 (DPMLATGGT) each bind 5-phospho-alpha-D-ribose 1-diphosphate. Residues I197 and 202 to 204 (GDA) contribute to the uracil site. 5-phospho-alpha-D-ribose 1-diphosphate is bound at residue D203.

Belongs to the UPRTase family. The cofactor is Mg(2+).

The catalysed reaction is UMP + diphosphate = 5-phospho-alpha-D-ribose 1-diphosphate + uracil. It participates in pyrimidine metabolism; UMP biosynthesis via salvage pathway; UMP from uracil: step 1/1. Its activity is regulated as follows. Allosterically activated by GTP. Catalyzes the conversion of uracil and 5-phospho-alpha-D-ribose 1-diphosphate (PRPP) to UMP and diphosphate. This chain is Uracil phosphoribosyltransferase, found in Bifidobacterium animalis subsp. lactis (strain AD011).